Reading from the N-terminus, the 251-residue chain is MEKQGLFSALCYLMLNTPLLFSVNATFTEVPKDVTIREGEDIEMPCAFRASGSTSFSLEIQWWYLKEATREMAQELAISAPGNRNKVTTSKDATKISTVRVQGNDISHRLRLSNVKKQDEGVYECRVSDFGDDETQEHKAQAMLRVISRFSPPDMQAAEAVSHIQSSGPRRNNPSSRATPEPGNKRAVPPAENLAPSLSTAASSSASPAPGKAAILRQQHGSGTGPIFANDPALYMFLLIFHQLVYLLLNH.

Positions methionine 1 to alanine 25 are cleaved as a signal peptide. Residues threonine 26–alanine 142 form the Ig-like V-type domain. The Extracellular segment spans residues threonine 26–proline 226. Cysteines 46 and 125 form a disulfide. The interval alanine 157–alanine 213 is disordered. Composition is skewed to low complexity over residues serine 166–arginine 177 and alanine 195–alanine 213. A helical membrane pass occupies residues isoleucine 227 to leucine 247. The Cytoplasmic segment spans residues leucine 248 to histidine 251.

It localises to the membrane. This is V-set and transmembrane domain-containing protein 2B (vstm2b) from Xenopus tropicalis (Western clawed frog).